Reading from the N-terminus, the 150-residue chain is MADKLHILLLNGPNLNMLGTREPDKYGTLTLTEIVNRLNAEADALNVTLDHLQSNAEYALIDRIHQAKDTVDYILINPAAFTHTSVAIRDALLAVSIPFIEIHLSNVHAREPFRQHSYLSDIAAGVICGFGADGYSYALQTAVKRLSQSH.

The Proton acceptor role is filled by Tyr26. Residues Asn77, His83, and Asp90 each contribute to the substrate site. Catalysis depends on His103, which acts as the Proton donor. Substrate contacts are provided by residues 104 to 105 and Arg114; that span reads LS.

The protein belongs to the type-II 3-dehydroquinase family. In terms of assembly, homododecamer.

It catalyses the reaction 3-dehydroquinate = 3-dehydroshikimate + H2O. The protein operates within metabolic intermediate biosynthesis; chorismate biosynthesis; chorismate from D-erythrose 4-phosphate and phosphoenolpyruvate: step 3/7. Functionally, catalyzes a trans-dehydration via an enolate intermediate. In Citrobacter koseri (strain ATCC BAA-895 / CDC 4225-83 / SGSC4696), this protein is 3-dehydroquinate dehydratase.